A 403-amino-acid polypeptide reads, in one-letter code: 26S proteasome regulatory subunit 8 homolog (403 aa).

ATP is bound at residue 186-193 (GPPGTGKT).

The protein belongs to the AAA ATPase family.

It is found in the cytoplasm. Its subcellular location is the nucleus. Its function is as follows. The 26S proteasome is involved in the ATP-dependent degradation of ubiquitinated proteins. The regulatory (or ATPase) complex confers ATP dependency and substrate specificity to the 26S complex. In Schizosaccharomyces pombe (strain 972 / ATCC 24843) (Fission yeast), this protein is 26S proteasome regulatory subunit 8 homolog (let1).